The primary structure comprises 136 residues: MKKFDILDFFYIKSQDTQILRYYISKNPTNYGGLSLTNGAEGKTSTMAKSLNTTPTLDTMPMFTEDVCFAAYSIDMQKILHNMKLKTNLEYPGLLFDHEGPDCLPLIKEAYGFVDKSFWVLPGRGKELFKDVKKVR.

The protein resides in the mitochondrion. This is an uncharacterized protein from Marchantia polymorpha (Common liverwort).